The sequence spans 449 residues: MSHITFDYSKVLESFAGQHEIDFLQGQVTEADKLLREGTGPGSDFLGWLDLPENYDKEEFARILTAAEKIKSDSEVLVVIGIGGSYLGAKAAIDFLNHHFANLQTAKERKAPQILYAGNSISSTYLADLVEYVQDKEFSVNVISKSGTTTEPAIAFRVFKELLVKKYGQEEANKRIYATTDKVKGAVKVEADANNWETFVVPDNVGGRFSVLTAVGLLPIAASGADITALMEGANAARKDLSSDKISENIAYQYAAVRNVLYRKGYITEILANYEPSLQYFGEWWKQLAGESEGKDQKGIYPTSANFSTDLHSLGQFIQEGYRNLFETVIRVDNPRKNVIIPELAEDLDGLGYLQGKDVDFVNKKATDGVLLAHTDGGVPNMFVTLPAQDEFTLGYTIYFFELAIAVSGYMNAVNPFDQPGVEAYKRNMFALLGKPGFEALSAELNARL.

The active-site Proton donor is the E291. Residues H312 and K426 contribute to the active site.

This sequence belongs to the GPI family.

The protein localises to the cytoplasm. The catalysed reaction is alpha-D-glucose 6-phosphate = beta-D-fructose 6-phosphate. It functions in the pathway carbohydrate biosynthesis; gluconeogenesis. It participates in carbohydrate degradation; glycolysis; D-glyceraldehyde 3-phosphate and glycerone phosphate from D-glucose: step 2/4. Catalyzes the reversible isomerization of glucose-6-phosphate to fructose-6-phosphate. This chain is Glucose-6-phosphate isomerase, found in Streptococcus pyogenes serotype M5 (strain Manfredo).